Reading from the N-terminus, the 440-residue chain is MSEFSQTVPELVAWARKNDFSISLPTERLAFLLAIATLNGERLDGEMSEGELVDAFRHVSKGFEQTHETVAVRANNAINDMVRQRLLNRFISELADGNAIYRLTPLGIGITDYYIRQREFSTLRLSMQLSIVAQELKRAADAADEGGDDFHWHRNVFAPLKYSVAEIFDSIDLTQRIMDEQQQGVKDDIAALLNKDWRAAISSCEMLLSETSGTLRELQDTLEAAGDKLQANLLRIQDATLGGAELGFIDKLVFDLQSKLDRIISWGQQAIDLWIGYDRHVHKFIRTAIDMDKNRVFAQRLRQSVQNYFDNPWTLTHANADRLLDMRDEELALRSEEVTGELPPDLEFEEFSEIREQLAAMIEQALKIYQEQQMPLNLGAVMRDYLAQYPRARHFDVARLVVDQAVRLGVAEADFSGLPAQWQAINDYGAKVQAHVIDKY.

The interval 208–236 (LSETSGTLRELQDTLEAAGDKLQANLLRI) is leucine-zipper.

Belongs to the MukF family. In terms of assembly, interacts, and probably forms a ternary complex, with MukE and MukB via its C-terminal region. The complex formation is stimulated by calcium or magnesium. It is required for an interaction between MukE and MukB.

The protein resides in the cytoplasm. The protein localises to the nucleoid. Involved in chromosome condensation, segregation and cell cycle progression. May participate in facilitating chromosome segregation by condensation DNA from both sides of a centrally located replisome during cell division. Not required for mini-F plasmid partitioning. Probably acts via its interaction with MukB and MukE. Overexpression results in anucleate cells. It has a calcium binding activity. The sequence is that of Chromosome partition protein MukF from Serratia proteamaculans (strain 568).